The chain runs to 459 residues: Glutamate--tRNA ligase 1 (459 aa).

The 'HIGH' region signature appears at 8–18 (PSPTGYIHIGN). The 'KMSKS' region signature appears at 249 to 253 (GLSKR). Residue K252 coordinates ATP.

It belongs to the class-I aminoacyl-tRNA synthetase family. Glutamate--tRNA ligase type 1 subfamily. Monomer.

It is found in the cytoplasm. The enzyme catalyses tRNA(Glu) + L-glutamate + ATP = L-glutamyl-tRNA(Glu) + AMP + diphosphate. Functionally, catalyzes the attachment of glutamate to tRNA(Glu) in a two-step reaction: glutamate is first activated by ATP to form Glu-AMP and then transferred to the acceptor end of tRNA(Glu). The polypeptide is Glutamate--tRNA ligase 1 (Bartonella quintana (strain Toulouse) (Rochalimaea quintana)).